The sequence spans 311 residues: Immune-associated nucleotide-binding protein 7 (311 aa).

In terms of domain architecture, AIG1-type G spans 14 to 222 (KQAENIVLVG…YTDDTYHMIK (209 aa)). The interval 23-30 (GRTGNGKS) is G1. GTP-binding positions include 23–31 (GRTGNGKSA) and serine 44. The G2 stretch occupies residues 50-54 (GVTMK). A G3 region spans residues 72–75 (DTPG). Residues 142 to 145 (TGGD) are G4. The segment at 181-183 (DNK) is G5. Asparagine 182 serves as a coordination point for GTP. The stretch at 218–295 (YHMIKEESEK…TQENNELNLA (78 aa)) forms a coiled coil.

The protein belongs to the TRAFAC class TrmE-Era-EngA-EngB-Septin-like GTPase superfamily. AIG1/Toc34/Toc159-like paraseptin GTPase family. IAN subfamily. Ubiquitous.

In Arabidopsis thaliana (Mouse-ear cress), this protein is Immune-associated nucleotide-binding protein 7.